Consider the following 584-residue polypeptide: Actin-binding protein IPP (584 aa).

The BTB domain maps to 37-104 (CDVQLQVGKE…IYTGVVNIAV (68 aa)). Kelch repeat units lie at residues 296-343 (YTRL…VVGG), 344-390 (MVYA…VCYG), 391-437 (AIYA…EMQG), 439-485 (IYAV…ALND), 487-533 (IYAI…TVNG), and 535-583 (LYVS…GVAV).

Expression seems confined to tissues derived from trophectoderm and primitive endoderm.

Its subcellular location is the cytoplasm. It is found in the cytoskeleton. Its function is as follows. May play a role in organizing the actin cytoskeleton. The chain is Actin-binding protein IPP (Ipp) from Mus musculus (Mouse).